The following is a 204-amino-acid chain: High frequency lysogenization protein HflD homolog (204 aa).

Belongs to the HflD family.

The protein resides in the cytoplasm. It localises to the cell inner membrane. This is High frequency lysogenization protein HflD homolog from Xylella fastidiosa (strain M23).